Consider the following 281-residue polypeptide: Protein phosphatase 2C homolog 1 (281 aa).

Residues Arg20 to Leu281 enclose the PPM-type phosphatase domain. Asp58, Gly59, Asp233, and Asp272 together coordinate Mn(2+).

The protein belongs to the PP2C family. As to quaternary structure, interacts with NBP2 and PBS2. Requires Mg(2+) as cofactor. Mn(2+) is required as a cofactor.

It is found in the peroxisome. The catalysed reaction is O-phospho-L-seryl-[protein] + H2O = L-seryl-[protein] + phosphate. It carries out the reaction O-phospho-L-threonyl-[protein] + H2O = L-threonyl-[protein] + phosphate. Serine and threonine phosphatase. Involved in tRNA splicing and cell separation. The protein is Protein phosphatase 2C homolog 1 (PTC1) of Saccharomyces cerevisiae (strain ATCC 204508 / S288c) (Baker's yeast).